We begin with the raw amino-acid sequence, 196 residues long: ECF RNA polymerase sigma factor SigK (196 aa).

Positions 39 to 105 (YDQTRARVYG…RAVDRVRSEQ (67 aa)) are sigma-70 factor domain-2. The Polymerase core binding signature appears at 62–65 (ETTQ). The sigma-70 factor domain-4 stretch occupies residues 142 to 191 (CLDSLTDVQRECIQLAYYDGLTYAQVADRLAANLATIKSRMRDGIRALRK). Residues 164–183 (YAQVADRLAANLATIKSRMR) constitute a DNA-binding region (H-T-H motif).

Belongs to the sigma-70 factor family. ECF subfamily. In terms of assembly, interacts transiently with the RNA polymerase catalytic core formed by RpoA, RpoB, RpoC and RpoZ (2 alpha, 1 beta, 1 beta' and 1 omega subunit) to form the RNA polymerase holoenzyme that can initiate transcription. Interacts (via sigma-70 factor domain 4) with anti-sigma-K factor RskA.

Sigma factors are initiation factors that promote the attachment of RNA polymerase to specific initiation sites and are then released. Extracytoplasmic function (ECF) sigma factors are held in an inactive form by an anti-sigma factor until released by regulated intramembrane proteolysis. This chain is ECF RNA polymerase sigma factor SigK (sigK), found in Mycolicibacterium vanbaalenii (strain DSM 7251 / JCM 13017 / BCRC 16820 / KCTC 9966 / NRRL B-24157 / PYR-1) (Mycobacterium vanbaalenii).